The sequence spans 451 residues: tRNA-2-methylthio-N(6)-dimethylallyladenosine synthase (451 aa).

The 119-residue stretch at 10-128 folds into the MTTase N-terminal domain; that stretch reads KKFYTLTFGC…FPQLLEHVMQ (119 aa). [4Fe-4S] cluster contacts are provided by cysteine 19, cysteine 55, cysteine 89, cysteine 165, cysteine 169, and cysteine 172. Positions 151–381 constitute a Radical SAM core domain; it reads REDSIKAWVV…ISVQQEISEQ (231 aa). One can recognise a TRAM domain in the interval 384 to 447; that stretch reads KDLENTVQRI…SWNLYGEIFE (64 aa).

The protein belongs to the methylthiotransferase family. MiaB subfamily. Monomer. [4Fe-4S] cluster is required as a cofactor.

The protein localises to the cytoplasm. The enzyme catalyses N(6)-dimethylallyladenosine(37) in tRNA + (sulfur carrier)-SH + AH2 + 2 S-adenosyl-L-methionine = 2-methylsulfanyl-N(6)-dimethylallyladenosine(37) in tRNA + (sulfur carrier)-H + 5'-deoxyadenosine + L-methionine + A + S-adenosyl-L-homocysteine + 2 H(+). Its function is as follows. Catalyzes the methylthiolation of N6-(dimethylallyl)adenosine (i(6)A), leading to the formation of 2-methylthio-N6-(dimethylallyl)adenosine (ms(2)i(6)A) at position 37 in tRNAs that read codons beginning with uridine. In Natranaerobius thermophilus (strain ATCC BAA-1301 / DSM 18059 / JW/NM-WN-LF), this protein is tRNA-2-methylthio-N(6)-dimethylallyladenosine synthase.